The primary structure comprises 212 residues: Interleukin-6 (212 aa).

The N-terminal stretch at 1 to 29 is a signal peptide; the sequence is MNSFSTSAFGPVAFSLGLLLVLPAAFPAP. Cystine bridges form between cysteine 72–cysteine 78 and cysteine 101–cysteine 111. The N-linked (GlcNAc...) asparagine glycan is linked to asparagine 73. Residue asparagine 172 is glycosylated (N-linked (GlcNAc...) asparagine).

Belongs to the IL-6 superfamily. Component of a hexamer of two molecules each of IL6, IL6R and IL6ST; first binds to IL6R to associate with the signaling subunit IL6ST. Interacts with IL6R (via the N-terminal ectodomain); this interaction may be affected by IL6R-binding with SORL1, hence decreasing IL6 cis signaling. Interacts with SORL1 (via the N-terminal ectodomain); this interaction leads to IL6 internalization and lysosomal degradation. May form a trimeric complex with the soluble SORL1 ectodomain and soluble IL6R receptor; this interaction might stabilize circulating IL6, hence promoting IL6 trans signaling.

Its subcellular location is the secreted. Functionally, cytokine with a wide variety of biological functions in immunity, tissue regeneration, and metabolism. Binds to IL6R, then the complex associates to the signaling subunit IL6ST/gp130 to trigger the intracellular IL6-signaling pathway. The interaction with the membrane-bound IL6R and IL6ST stimulates 'classic signaling', whereas the binding of IL6 and soluble IL6R to IL6ST stimulates 'trans-signaling'. Alternatively, 'cluster signaling' occurs when membrane-bound IL6:IL6R complexes on transmitter cells activate IL6ST receptors on neighboring receiver cells. IL6 is a potent inducer of the acute phase response. Rapid production of IL6 contributes to host defense during infection and tissue injury, but excessive IL6 synthesis is involved in disease pathology. In the innate immune response, is synthesized by myeloid cells, such as macrophages and dendritic cells, upon recognition of pathogens through toll-like receptors (TLRs) at the site of infection or tissue injury. In the adaptive immune response, is required for the differentiation of B cells into immunoglobulin-secreting cells. Plays a major role in the differentiation of CD4(+) T cell subsets. Essential factor for the development of T follicular helper (Tfh) cells that are required for the induction of germinal-center formation. Required to drive naive CD4(+) T cells to the Th17 lineage. Also required for proliferation of myeloma cells and the survival of plasmablast cells. Its function is as follows. Acts as an essential factor in bone homeostasis and on vessels directly or indirectly by induction of VEGF, resulting in increased angiogenesis activity and vascular permeability. Induces, through 'trans-signaling' and synergistically with IL1B and TNF, the production of VEGF. Involved in metabolic controls, is discharged into the bloodstream after muscle contraction increasing lipolysis and improving insulin resistance. 'Trans-signaling' in central nervous system also regulates energy and glucose homeostasis. Mediates, through GLP-1, crosstalk between insulin-sensitive tissues, intestinal L cells and pancreatic islets to adapt to changes in insulin demand. Also acts as a myokine. Plays a protective role during liver injury, being required for maintenance of tissue regeneration. Also has a pivotal role in iron metabolism by regulating HAMP/hepcidin expression upon inflammation or bacterial infection. Through activation of IL6ST-YAP-NOTCH pathway, induces inflammation-induced epithelial regeneration. The chain is Interleukin-6 (IL6) from Cercocebus atys (Sooty mangabey).